A 432-amino-acid chain; its full sequence is Septin-11 (432 aa).

The residue at position 2 (Ala-2) is an N-acetylalanine. The residue at position 9 (Ser-9) is a Phosphoserine. The Septin-type G domain maps to 38–304 (QGFCFNILCV…ELYRRCKLEE (267 aa)). The G1 motif stretch occupies residues 48–55 (GETGIGKS). GTP-binding positions include 48–55 (GETGIGKS), Gly-103, 184–192 (KADTIAKNE), Gly-238, and Arg-253. The G3 motif stretch occupies residues 100–103 (DTVG). Positions 183–186 (AKAD) are G4 motif. A coiled-coil region spans residues 320–413 (QETYEAKRNE…LLQSQAQQSG (94 aa)). Low complexity predominate over residues 403–416 (QLLQSQAQQSGAQQ). The segment at 403 to 432 (QLLQSQAQQSGAQQTKKDKDKKNSPWLCTE) is disordered.

This sequence belongs to the TRAFAC class TrmE-Era-EngA-EngB-Septin-like GTPase superfamily. Septin GTPase family. In terms of assembly, septins polymerize into heterooligomeric protein complexes that form filaments, and can associate with cellular membranes, actin filaments and microtubules. Forms homooligomers. GTPase activity is required for filament formation. Interacts with SEPTIN7, SEPTIN9 and SEPTIN12.

It localises to the cytoplasm. The protein resides in the cytoskeleton. It is found in the synapse. The protein localises to the cell projection. Its subcellular location is the dendritic spine. It localises to the axon. Functionally, filament-forming cytoskeletal GTPase. May play a role in cytokinesis (Potential). May play a role in the cytoarchitecture of neurons, including dendritic arborization and dendritic spines, and in GABAergic synaptic connectivity. The protein is Septin-11 of Macaca fascicularis (Crab-eating macaque).